The primary structure comprises 140 residues: Actin-depolymerizing factor 8 (140 aa).

Position 6 is a phosphoserine (Ser-6). The ADF-H domain maps to 7–139 (GMHVNDECKI…SLDIIKGRLN (133 aa)).

It belongs to the actin-binding proteins ADF family. Expressed in the root trichoblast cells and developed root hairs.

Its subcellular location is the cytoplasm. It localises to the cytoskeleton. Actin-depolymerizing protein. Severs actin filaments (F-actin) and binds to actin monomers. The sequence is that of Actin-depolymerizing factor 8 (ADF8) from Arabidopsis thaliana (Mouse-ear cress).